The following is a 736-amino-acid chain: Nucleoporin nup60 (736 aa).

The segment at 1–46 (MSSGPIRTLHKGKAARNRTPYDRIAASKDGNHSNGPQTPSKSIFQR) is disordered. The span at 19-31 (TPYDRIAASKDGN) shows a compositional bias: basic and acidic residues. The span at 32–43 (HSNGPQTPSKSI) shows a compositional bias: polar residues. Phosphoserine is present on residues Ser-157, Ser-159, Ser-161, and Ser-162. Disordered regions lie at residues 178-210 (RAAAISKRESGVSSEPRARTSSLTPGNTPNSAK), 295-321 (DTSFTNVPTSSPLHQSTTANHPEKTPS), 338-519 (TPSI…PNET), 565-614 (AVTD…RSLF), and 647-701 (EQAE…FPKF). Composition is skewed to polar residues over residues 196–210 (RTSSLTPGNTPNSAK) and 295–314 (DTSFTNVPTSSPLHQSTTAN). The segment covering 375–397 (QIRPSSEKSEPEKKEPSAFETLE) has biased composition (basic and acidic residues). The segment covering 456–473 (SATTDKPSPPVSSIFSFN) has biased composition (polar residues). 2 stretches are compositionally biased toward low complexity: residues 474 to 505 (APSAASTKPSPAVSSTFSFNAPTTTPSATSFS) and 573 to 587 (EVSSSNQASSSTMIS). A compositionally biased stretch (polar residues) spans 588–597 (QPNTGFSFGS). Over residues 664–692 (EVEKPSAEGTNEHKQDATMTLEKTDKQGS) the composition is skewed to basic and acidic residues.

As to quaternary structure, component of the nuclear pore complex (NPC). NPC constitutes the exclusive means of nucleocytoplasmic transport. NPCs allow the passive diffusion of ions and small molecules and the active, nuclear transport receptor-mediated bidirectional transport of macromolecules such as proteins, RNAs, ribonucleoparticles (RNPs), and ribosomal subunits across the nuclear envelope.

The protein localises to the nucleus. It localises to the nuclear pore complex. It is found in the nucleus membrane. Functionally, functions as a component of the nuclear pore complex (NPC). NPC components, collectively referred to as nucleoporins (NUPs), can play the role of both NPC structural components and of docking or interaction partners for transiently associated nuclear transport factors. Active directional transport is assured by both, a Phe-Gly (FG) repeat affinity gradient for these transport factors across the NPC and a transport cofactor concentration gradient across the nuclear envelope. This chain is Nucleoporin nup60 (nup60), found in Schizosaccharomyces pombe (strain 972 / ATCC 24843) (Fission yeast).